The sequence spans 76 residues: DNA-directed RNA polymerase subunit epsilon (76 aa).

It belongs to the RNA polymerase subunit epsilon family. As to quaternary structure, RNAP is composed of a core of 2 alpha, a beta and a beta' subunit. The core is associated with a delta subunit, and at least one of epsilon or omega. When a sigma factor is associated with the core the holoenzyme is formed, which can initiate transcription.

It carries out the reaction RNA(n) + a ribonucleoside 5'-triphosphate = RNA(n+1) + diphosphate. In terms of biological role, a non-essential component of RNA polymerase (RNAP). In Lactococcus lactis subsp. cremoris (strain MG1363), this protein is DNA-directed RNA polymerase subunit epsilon.